Consider the following 183-residue polypeptide: Triggering receptor expressed on myeloid cells 3 (183 aa).

An N-terminal signal peptide occupies residues 1-19; sequence MSPLLLWLGLMLCVSGLQA. The Extracellular segment spans residues 20 to 138; it reads GDEEEHKCFL…AWCQGKPVMV (119 aa). The Ig-like V-type domain maps to 30-128; sequence EGENLTLTCP…VIILRQRIRL (99 aa). Asparagine 33 carries an N-linked (GlcNAc...) asparagine glycan. A disulfide bridge connects residues cysteine 38 and cysteine 110. A helical membrane pass occupies residues 139 to 159; sequence IVLTCGFILNKGLVFSVLFVF. Residues 160–183 lie on the Cytoplasmic side of the membrane; sequence LCKAGPKVLQPSKTSKVQGVSEKQ.

In terms of assembly, interacts with TYROBP/DAP12. As to expression, expressed in macrophages and in T-cells.

The protein resides in the cell membrane. Its function is as follows. Forms a receptor signaling complex with TYROBP/DAP12 which mediates activation of macrophages as part of the innate immune response. In Mus musculus (Mouse), this protein is Triggering receptor expressed on myeloid cells 3.